The sequence spans 274 residues: Ribosomal RNA small subunit methyltransferase A (274 aa).

The S-adenosyl-L-methionine site is built by N20, L22, G47, E68, D90, and N110.

This sequence belongs to the class I-like SAM-binding methyltransferase superfamily. rRNA adenine N(6)-methyltransferase family. RsmA subfamily.

It is found in the cytoplasm. The catalysed reaction is adenosine(1518)/adenosine(1519) in 16S rRNA + 4 S-adenosyl-L-methionine = N(6)-dimethyladenosine(1518)/N(6)-dimethyladenosine(1519) in 16S rRNA + 4 S-adenosyl-L-homocysteine + 4 H(+). Specifically dimethylates two adjacent adenosines (A1518 and A1519) in the loop of a conserved hairpin near the 3'-end of 16S rRNA in the 30S particle. May play a critical role in biogenesis of 30S subunits. In Chlorobaculum parvum (strain DSM 263 / NCIMB 8327) (Chlorobium vibrioforme subsp. thiosulfatophilum), this protein is Ribosomal RNA small subunit methyltransferase A.